The following is a 1035-amino-acid chain: Kinesin-like protein KIN-4A (1035 aa).

Positions 10 to 369 (CVKVAVHVRP…LKYANRARNI (360 aa)) constitute a Kinesin motor domain. An ATP-binding site is contributed by 89–96 (GQTGSGKT). 2 coiled-coil regions span residues 380-437 (VADE…LRNH) and 498-702 (MLQD…RKSS). Disordered regions lie at residues 697–720 (EARK…HMTE), 766–787 (VMSG…NTLS), and 882–928 (HSES…PLSP). Polar residues-rich tracts occupy residues 704–716 (RDNS…SPGS) and 778–787 (NGNSRANTLS). Residues 850–904 (NVAADARCQVREKEMEIKEMKEQMTELVTILRHSESRRRETEKQLKQREQAAVTA) adopt a coiled-coil conformation. Residues 882 to 898 (HSESRRRETEKQLKQRE) show a composition bias toward basic and acidic residues. Residues 902-926 (VTATTSPGNGNGSVKHSADDSNTPL) show a composition bias toward polar residues. The Nuclear localization signal motif lies at 971–987 (KKVSIAGQSGKLWRWKR). The disordered stretch occupies residues 1014-1035 (DETMTRTRPRPQLLPHRPQRVM).

It belongs to the TRAFAC class myosin-kinesin ATPase superfamily. Kinesin family. KIN-4 subfamily. Homodimer. As to expression, expressed in young tissues with cell divisions, including initiating adventitious roots, primary root tips, flower primordia, intercalary meristems, sub-epidermal regions of young culms and panicles.

It localises to the nucleus. The protein localises to the cytoplasm. The protein resides in the cytoskeleton. May be regulated by cyclin-dependent kinase A. Functionally, microtubule-dependent motor protein involved in the control of the oriented deposition of cellulose microfibrils. Involved in wall biogenesis and modification, and contributes to cell-cycle progression and cell division. Acts as a transcriptional activator in gibberellic acid (GA) biosynthesis pathway. Binds specifically to the DNA sequence 5'-ACCAACTTGAA-3' of the ent-kaurene oxidase 2 (CYP701A6 or OsKO2) promoter. May regulate CYP701A6 gene expression and mediates cell elongation by regulating the GA biosynthesis pathway. The protein is Kinesin-like protein KIN-4A of Oryza sativa subsp. japonica (Rice).